We begin with the raw amino-acid sequence, 226 residues long: Cytidylate kinase (226 aa).

An ATP-binding site is contributed by Gly-10–Thr-18.

It belongs to the cytidylate kinase family. Type 1 subfamily.

It localises to the cytoplasm. It catalyses the reaction CMP + ATP = CDP + ADP. The catalysed reaction is dCMP + ATP = dCDP + ADP. In Streptococcus pyogenes serotype M4 (strain MGAS10750), this protein is Cytidylate kinase.